Consider the following 358-residue polypeptide: Probable arabinan endo-1,5-alpha-L-arabinosidase B (358 aa).

Positions 1-16 (MVLVATLFSLFTVSLC) are cleaved as a signal peptide. Asp-39 acts as the Proton acceptor in catalysis. Asn-194 carries an N-linked (GlcNAc...) asparagine glycan. The tract at residues 202–227 (HLAKHPKTERVNSQDQNPDPLCRDSS) is disordered. Glu-233 functions as the Proton donor in the catalytic mechanism.

It belongs to the glycosyl hydrolase 43 family.

Its subcellular location is the secreted. It carries out the reaction Endohydrolysis of (1-&gt;5)-alpha-arabinofuranosidic linkages in (1-&gt;5)-arabinans.. The protein operates within glycan metabolism; L-arabinan degradation. Endo-1,5-alpha-L-arabinanase involved in degradation of pectin. Its preferred substrate is linear 1,5-alpha-L-arabinan. The sequence is that of Probable arabinan endo-1,5-alpha-L-arabinosidase B (abnB) from Aspergillus flavus (strain ATCC 200026 / FGSC A1120 / IAM 13836 / NRRL 3357 / JCM 12722 / SRRC 167).